The primary structure comprises 428 residues: UPF0761 membrane protein TERTU_3006 (428 aa).

7 helical membrane-spanning segments follow: residues 47 to 67 (LFAL…IPAF), 104 to 124 (LSGV…RNIE), 143 to 163 (YLLY…AFLL), 189 to 209 (VVPW…VPNC), 218 to 238 (IGGV…GYIV), 248 to 268 (GAFA…TIIL), and 292 to 312 (MIVV…GESV).

The protein belongs to the UPF0761 family.

The protein localises to the cell inner membrane. This is UPF0761 membrane protein TERTU_3006 from Teredinibacter turnerae (strain ATCC 39867 / T7901).